Here is a 339-residue protein sequence, read N- to C-terminus: HPr kinase/phosphorylase (339 aa).

Active-site residues include His153 and Lys174. 168 to 175 serves as a coordination point for ATP; it reads GKSGLGKS. Ser175 is a binding site for Mg(2+). The Proton acceptor; for phosphorylation activity. Proton donor; for dephosphorylation activity role is filled by Asp192. Residues 216–225 form an important for the catalytic mechanism of both phosphorylation and dephosphorylation region; sequence MEIRGLGVVD. Glu217 contributes to the Mg(2+) binding site. The active site involves Arg258. The tract at residues 279-284 is important for the catalytic mechanism of dephosphorylation; that stretch reads PINPGK.

It belongs to the HPrK/P family. In terms of assembly, homohexamer. Requires Mg(2+) as cofactor.

The enzyme catalyses [HPr protein]-L-serine + ATP = [HPr protein]-O-phospho-L-serine + ADP + H(+). It catalyses the reaction [HPr protein]-O-phospho-L-serine + phosphate + H(+) = [HPr protein]-L-serine + diphosphate. Its function is as follows. Catalyzes the ATP- as well as the pyrophosphate-dependent phosphorylation of a specific serine residue in HPr, a phosphocarrier protein of the phosphoenolpyruvate-dependent sugar phosphotransferase system (PTS). HprK/P also catalyzes the pyrophosphate-producing, inorganic phosphate-dependent dephosphorylation (phosphorolysis) of seryl-phosphorylated HPr (P-Ser-HPr). The chain is HPr kinase/phosphorylase from Chlorobium phaeobacteroides (strain BS1).